The chain runs to 155 residues: D-aminoacyl-tRNA deacylase (155 aa).

A Gly-cisPro motif, important for rejection of L-amino acids motif is present at residues 137–138 (GP).

This sequence belongs to the DTD family. As to quaternary structure, homodimer.

The protein resides in the cytoplasm. The catalysed reaction is glycyl-tRNA(Ala) + H2O = tRNA(Ala) + glycine + H(+). The enzyme catalyses a D-aminoacyl-tRNA + H2O = a tRNA + a D-alpha-amino acid + H(+). In terms of biological role, an aminoacyl-tRNA editing enzyme that deacylates mischarged D-aminoacyl-tRNAs. Also deacylates mischarged glycyl-tRNA(Ala), protecting cells against glycine mischarging by AlaRS. Acts via tRNA-based rather than protein-based catalysis; rejects L-amino acids rather than detecting D-amino acids in the active site. By recycling D-aminoacyl-tRNA to D-amino acids and free tRNA molecules, this enzyme counteracts the toxicity associated with the formation of D-aminoacyl-tRNA entities in vivo and helps enforce protein L-homochirality. The sequence is that of D-aminoacyl-tRNA deacylase from Geotalea uraniireducens (strain Rf4) (Geobacter uraniireducens).